A 492-amino-acid polypeptide reads, in one-letter code: Probable Xaa-Pro aminopeptidase ACLA_020440 (492 aa).

4 residues coordinate Mn(2+): Asp-272, Asp-283, Glu-421, and Glu-460.

This sequence belongs to the peptidase M24B family. The cofactor is Mn(2+).

It catalyses the reaction Release of any N-terminal amino acid, including proline, that is linked to proline, even from a dipeptide or tripeptide.. Functionally, catalyzes the removal of a penultimate prolyl residue from the N-termini of peptides. The chain is Probable Xaa-Pro aminopeptidase ACLA_020440 from Aspergillus clavatus (strain ATCC 1007 / CBS 513.65 / DSM 816 / NCTC 3887 / NRRL 1 / QM 1276 / 107).